A 202-amino-acid polypeptide reads, in one-letter code: uncharacterized protein (202 aa).

Positions 1–18 are cleaved as a signal peptide; that stretch reads MKNRLLILSLLVSVPAFA.

This sequence to E.coli YebB.

This is an uncharacterized protein from Escherichia coli (strain K12).